Reading from the N-terminus, the 665-residue chain is DNA mismatch repair protein MutL (665 aa).

Composition is skewed to polar residues over residues 348 to 361 and 407 to 421; these read LEAT…NGLS and PSSQ…NSRY. Disordered stretches follow at residues 348–370 and 385–445; these read LEAT…AEEG and VHRG…STSA. Low complexity predominate over residues 426-445; that stretch reads YSTNAASTNTASNYSHSTSA.

It belongs to the DNA mismatch repair MutL/HexB family.

Its function is as follows. This protein is involved in the repair of mismatches in DNA. It is required for dam-dependent methyl-directed DNA mismatch repair. May act as a 'molecular matchmaker', a protein that promotes the formation of a stable complex between two or more DNA-binding proteins in an ATP-dependent manner without itself being part of a final effector complex. This chain is DNA mismatch repair protein MutL, found in Shewanella denitrificans (strain OS217 / ATCC BAA-1090 / DSM 15013).